A 233-amino-acid chain; its full sequence is tRNA pseudouridine synthase B (233 aa).

The Nucleophile role is filled by Asp48.

It belongs to the pseudouridine synthase TruB family. Type 1 subfamily.

It carries out the reaction uridine(55) in tRNA = pseudouridine(55) in tRNA. In terms of biological role, responsible for synthesis of pseudouridine from uracil-55 in the psi GC loop of transfer RNAs. In Bacteroides fragilis (strain ATCC 25285 / DSM 2151 / CCUG 4856 / JCM 11019 / LMG 10263 / NCTC 9343 / Onslow / VPI 2553 / EN-2), this protein is tRNA pseudouridine synthase B.